The sequence spans 98 residues: UPF0235 protein azo3464 (98 aa).

It belongs to the UPF0235 family.

The protein is UPF0235 protein azo3464 of Azoarcus sp. (strain BH72).